We begin with the raw amino-acid sequence, 212 residues long: Cytidylate kinase (212 aa).

11–19 (GPAASGKGT) contributes to the ATP binding site. Residues 50-69 (GGDPADPAASEEQARSLSRL) form a disordered region.

It belongs to the cytidylate kinase family. Type 1 subfamily.

Its subcellular location is the cytoplasm. It catalyses the reaction CMP + ATP = CDP + ADP. The enzyme catalyses dCMP + ATP = dCDP + ADP. This Acidiphilium cryptum (strain JF-5) protein is Cytidylate kinase.